Reading from the N-terminus, the 376-residue chain is Glutamate 5-kinase (376 aa).

K15 is an ATP binding site. Positions 56, 143, and 155 each coordinate substrate. An ATP-binding site is contributed by 175 to 176 (SD). The PUA domain maps to 281 to 358 (KGTLTIDAGA…PDVMSILGIT (78 aa)).

It belongs to the glutamate 5-kinase family.

The protein localises to the cytoplasm. It catalyses the reaction L-glutamate + ATP = L-glutamyl 5-phosphate + ADP. It functions in the pathway amino-acid biosynthesis; L-proline biosynthesis; L-glutamate 5-semialdehyde from L-glutamate: step 1/2. In terms of biological role, catalyzes the transfer of a phosphate group to glutamate to form L-glutamate 5-phosphate. This chain is Glutamate 5-kinase, found in Rhodopseudomonas palustris (strain BisB18).